The chain runs to 270 residues: Phosphatidylglycerol--prolipoprotein diacylglyceryl transferase (270 aa).

The next 4 membrane-spanning stretches (helical) occupy residues 19-39 (FPVY…LWLA), 54-74 (IDLV…YYVI), 92-112 (QGGL…ILFA), and 116-136 (GLSF…GQAI). Arginine 138 lines the a 1,2-diacyl-sn-glycero-3-phospho-(1'-sn-glycerol) pocket. 3 consecutive transmembrane segments (helical) span residues 178–198 (HPTF…LLAL), 206–226 (GELF…VEGL), and 236–256 (LRIA…FIIV).

It belongs to the Lgt family.

The protein resides in the cell membrane. It carries out the reaction L-cysteinyl-[prolipoprotein] + a 1,2-diacyl-sn-glycero-3-phospho-(1'-sn-glycerol) = an S-1,2-diacyl-sn-glyceryl-L-cysteinyl-[prolipoprotein] + sn-glycerol 1-phosphate + H(+). It participates in protein modification; lipoprotein biosynthesis (diacylglyceryl transfer). Catalyzes the transfer of the diacylglyceryl group from phosphatidylglycerol to the sulfhydryl group of the N-terminal cysteine of a prolipoprotein, the first step in the formation of mature lipoproteins. The polypeptide is Phosphatidylglycerol--prolipoprotein diacylglyceryl transferase (Bacillus mycoides (strain KBAB4) (Bacillus weihenstephanensis)).